Here is a 210-residue protein sequence, read N- to C-terminus: LESDFADMDVIGISGNFCSDKKPAAVNWIEGRGKSVVCEAIIKEEVVKKVLKTDVALLVELNMLKNLAGSAVAGALGGFNAHAGNIVSAIFIATGQDPAQNVESSHCITMMEAVNDGKDLHISVTLPSIEVGTVGGGTQLASQSACLNLLGVMGACKESPGSYSRLLATIVAGSVLAGELSLMSAIAAGQLVKSHMKYNRSSKDVSKAAS.

Catalysis depends on charge relay system residues K21 and D97. Residues 166–186 (LLATIVAGSVLAGELSLMSAI) form a helical membrane-spanning segment. H195 acts as the Proton donor in catalysis. N-linked (GlcNAc...) asparagine glycosylation is present at N199.

The protein belongs to the HMG-CoA reductase family.

It localises to the endoplasmic reticulum membrane. The protein localises to the mitochondrion membrane. Its subcellular location is the plastid membrane. The enzyme catalyses (R)-mevalonate + 2 NADP(+) + CoA = (3S)-3-hydroxy-3-methylglutaryl-CoA + 2 NADPH + 2 H(+). It functions in the pathway metabolic intermediate biosynthesis; (R)-mevalonate biosynthesis; (R)-mevalonate from acetyl-CoA: step 3/3. Functionally, catalyzes the synthesis of mevalonate. The specific precursor of all isoprenoid compounds present in plants. This chain is 3-hydroxy-3-methylglutaryl-coenzyme A reductase 2 (HMGR2), found in Hevea brasiliensis (Para rubber tree).